Here is a 328-residue protein sequence, read N- to C-terminus: Tetraacyldisaccharide 4'-kinase (328 aa).

Position 55–62 (55–62) interacts with ATP; that stretch reads TAGGNGKT.

It belongs to the LpxK family.

The catalysed reaction is a lipid A disaccharide + ATP = a lipid IVA + ADP + H(+). The protein operates within glycolipid biosynthesis; lipid IV(A) biosynthesis; lipid IV(A) from (3R)-3-hydroxytetradecanoyl-[acyl-carrier-protein] and UDP-N-acetyl-alpha-D-glucosamine: step 6/6. In terms of biological role, transfers the gamma-phosphate of ATP to the 4'-position of a tetraacyldisaccharide 1-phosphate intermediate (termed DS-1-P) to form tetraacyldisaccharide 1,4'-bis-phosphate (lipid IVA). The chain is Tetraacyldisaccharide 4'-kinase from Yersinia pseudotuberculosis serotype I (strain IP32953).